The chain runs to 151 residues: Histone H2A.2.2 (151 aa).

M1 bears the N-acetylmethionine mark. The tract at residues E129 to A151 is disordered. Residues K139–A151 are compositionally biased toward basic residues. 2 short sequence motifs (SPKK motif) span residues S140–K143 and S147–K150.

The protein belongs to the histone H2A family. The nucleosome is a histone octamer containing two molecules each of H2A, H2B, H3 and H4 assembled in one H3-H4 heterotetramer and two H2A-H2B heterodimers. The octamer wraps approximately 147 bp of DNA. In terms of processing, phosphorylated within its C-terminal part, probably at the SPKK motifs.

It localises to the nucleus. The protein resides in the chromosome. Core component of nucleosome. Nucleosomes wrap and compact DNA into chromatin, limiting DNA accessibility to the cellular machineries which require DNA as a template. Histones thereby play a central role in transcription regulation, DNA repair, DNA replication and chromosomal stability. DNA accessibility is regulated via a complex set of post-translational modifications of histones, also called histone code, and nucleosome remodeling. This Triticum aestivum (Wheat) protein is Histone H2A.2.2.